The sequence spans 753 residues: MAP/microtubule affinity-regulating kinase 3 (753 aa).

The interval 1–36 (MSTRTPLPTVNERDTENHTSHGDGRQEVTSRTSRSG) is disordered. Basic and acidic residues predominate over residues 11–28 (NERDTENHTSHGDGRQEV). Residue Ser42 is modified to Phosphoserine. A Protein kinase domain is found at 56–307 (YRLLKTIGKG…LEQIMKDRWI (252 aa)). Residues 62–70 (IGKGNFAKV) and Lys85 contribute to the ATP site. Residue Asp178 is the Proton acceptor of the active site. Phosphothreonine; by LKB1 is present on Thr211. A UBA domain is found at 326-365 (ISDQKRIDIMVGMGYSQEEIQESLSKMKYDEITATYLLLG). Ser368, Ser374, Ser376, Ser380, Ser383, Leu384, Ser400, Arg407, Ser419, and Ser469 each carry phosphoserine. The tract at residues 370-600 (ELDASDSSSS…TPLSQTRSRG (231 aa)) is disordered. Low complexity predominate over residues 374–385 (SDSSSSSNLSLA). Polar residues predominate over residues 391 to 400 (SDLNNSTGQS). 2 stretches are compositionally biased toward polar residues: residues 490 to 513 (STVPSSNTASGGMTRRNTYVCSER) and 521 to 548 (VIQNGKENSTIPDQRTPVASTHSISSAA). Ser540 and Ser543 each carry phosphoserine. Thr549 is subject to Phosphothreonine. Thr564 is modified (phosphothreonine; by PKC/PRKCZ). 4 positions are modified to phosphoserine: Ser583, Ser598, Ser601, and Ser643. Residues 584 to 600 (PSLSHEATPLSQTRSRG) are compositionally biased toward polar residues. Residues 632–655 (NGRYEGSSRNVSAEQKDENKEAKP) are disordered. Over residues 645 to 655 (EQKDENKEAKP) the composition is skewed to basic and acidic residues. A KA1 domain is found at 704 to 753 (DGHAENLVQWEMEVCKLPRLSLNGVRFKRISGTSIAFKNIASKIANELKL).

It belongs to the protein kinase superfamily. CAMK Ser/Thr protein kinase family. SNF1 subfamily. As to quaternary structure, interacts with MAPT/TAU. Interacts with DLG5 (via coiled-coil domain). Interacts with STK3/MST2 and STK4/MST1 in the presence of DLG5. Interacts with YWHAB, YWHAG, YWHAQ and YWHAZ. Interacts with PKP2 (via N-terminus). Interacts with CDC25C. Interacts with KSR1. Post-translationally, phosphorylated at Thr-211 by STK11/LKB1 in complex with STE20-related adapter-alpha (STRADA) pseudo kinase and CAB39. Phosphorylation at Thr-564 by PRKCZ/aPKC inhibits the kinase activity. In terms of tissue distribution, ubiquitous.

The protein localises to the cell membrane. It localises to the cell projection. It is found in the dendrite. Its subcellular location is the cytoplasm. It carries out the reaction L-seryl-[protein] + ATP = O-phospho-L-seryl-[protein] + ADP + H(+). The catalysed reaction is L-threonyl-[protein] + ATP = O-phospho-L-threonyl-[protein] + ADP + H(+). With respect to regulation, activated by phosphorylation on Thr-211. Inhibited by phosphorylation on Thr-564. Functionally, serine/threonine-protein kinase. Involved in the specific phosphorylation of microtubule-associated proteins for MAP2 and MAP4. Phosphorylates the microtubule-associated protein MAPT/TAU. Phosphorylates CDC25C on 'Ser-216'. Regulates localization and activity of some histone deacetylases by mediating phosphorylation of HDAC7, promoting subsequent interaction between HDAC7 and 14-3-3 and export from the nucleus. Regulates localization and activity of MITF by mediating its phosphorylation, promoting subsequent interaction between MITF and 14-3-3 and retention in the cytosol. Negatively regulates the Hippo signaling pathway and antagonizes the phosphorylation of LATS1. Cooperates with DLG5 to inhibit the kinase activity of STK3/MST2 toward LATS1. Phosphorylates PKP2 and KSR1. The sequence is that of MAP/microtubule affinity-regulating kinase 3 (MARK3) from Homo sapiens (Human).